The sequence spans 205 residues: dITP/XTP pyrophosphatase (205 aa).

Position 8–13 (8–13 (SGNKGK)) interacts with substrate. Aspartate 69 functions as the Proton acceptor in the catalytic mechanism. Aspartate 69 provides a ligand contact to Mg(2+). Substrate-binding positions include serine 70, 153-156 (HGYD), lysine 176, and 181-182 (HR).

This sequence belongs to the HAM1 NTPase family. In terms of assembly, homodimer. Mg(2+) serves as cofactor.

It carries out the reaction XTP + H2O = XMP + diphosphate + H(+). The catalysed reaction is dITP + H2O = dIMP + diphosphate + H(+). The enzyme catalyses ITP + H2O = IMP + diphosphate + H(+). Pyrophosphatase that catalyzes the hydrolysis of nucleoside triphosphates to their monophosphate derivatives, with a high preference for the non-canonical purine nucleotides XTP (xanthosine triphosphate), dITP (deoxyinosine triphosphate) and ITP. Seems to function as a house-cleaning enzyme that removes non-canonical purine nucleotides from the nucleotide pool, thus preventing their incorporation into DNA/RNA and avoiding chromosomal lesions. This chain is dITP/XTP pyrophosphatase, found in Shewanella oneidensis (strain ATCC 700550 / JCM 31522 / CIP 106686 / LMG 19005 / NCIMB 14063 / MR-1).